A 110-amino-acid polypeptide reads, in one-letter code: Large ribosomal subunit protein uL22 (110 aa).

It belongs to the universal ribosomal protein uL22 family. In terms of assembly, part of the 50S ribosomal subunit.

This protein binds specifically to 23S rRNA; its binding is stimulated by other ribosomal proteins, e.g. L4, L17, and L20. It is important during the early stages of 50S assembly. It makes multiple contacts with different domains of the 23S rRNA in the assembled 50S subunit and ribosome. In terms of biological role, the globular domain of the protein is located near the polypeptide exit tunnel on the outside of the subunit, while an extended beta-hairpin is found that lines the wall of the exit tunnel in the center of the 70S ribosome. The polypeptide is Large ribosomal subunit protein uL22 (Ruthia magnifica subsp. Calyptogena magnifica).